The primary structure comprises 207 residues: Large ribosomal subunit protein uL4 (207 aa).

The tract at residues 50–75 is disordered; the sequence is KTKTVSEVSGTTKKPFKQKGTGNARQ.

Belongs to the universal ribosomal protein uL4 family. Part of the 50S ribosomal subunit.

Its function is as follows. One of the primary rRNA binding proteins, this protein initially binds near the 5'-end of the 23S rRNA. It is important during the early stages of 50S assembly. It makes multiple contacts with different domains of the 23S rRNA in the assembled 50S subunit and ribosome. Functionally, forms part of the polypeptide exit tunnel. This chain is Large ribosomal subunit protein uL4, found in Rickettsia felis (strain ATCC VR-1525 / URRWXCal2) (Rickettsia azadi).